The sequence spans 188 residues: Zinc finger protein 428 (188 aa).

Residues 1–162 (MTETREPAET…EEEEEEGTYH (162 aa)) are disordered. The segment covering 40 to 61 (PDSEEEEDEEEEEEETTDDPEY) has biased composition (acidic residues). Residues 84-94 (RAAQPPAQPCQ) show a composition bias toward low complexity. Residue Thr-108 is modified to Phosphothreonine. Positions 116–129 (PATAPQEAPAPEGR) are enriched in low complexity. A compositionally biased stretch (basic and acidic residues) spans 138–149 (PPRAGEGRPAGR). The C2H2-type zinc finger occupies 161-183 (YHCTECEDSFDNLGELHGHFMLH).

In Homo sapiens (Human), this protein is Zinc finger protein 428 (ZNF428).